Here is a 274-residue protein sequence, read N- to C-terminus: Thymidylate synthase (274 aa).

DUMP is bound at residue Arg-21. His-51 provides a ligand contact to (6R)-5,10-methylene-5,6,7,8-tetrahydrofolate. 123-124 lines the dUMP pocket; the sequence is RR. The active-site Nucleophile is Cys-156. Residues 176–179, Asn-187, and 217–219 each bind dUMP; these read RSAD and HIY. Asp-179 is a binding site for (6R)-5,10-methylene-5,6,7,8-tetrahydrofolate. Ala-273 is a binding site for (6R)-5,10-methylene-5,6,7,8-tetrahydrofolate.

This sequence belongs to the thymidylate synthase family. Bacterial-type ThyA subfamily. As to quaternary structure, homodimer.

The protein resides in the cytoplasm. The catalysed reaction is dUMP + (6R)-5,10-methylene-5,6,7,8-tetrahydrofolate = 7,8-dihydrofolate + dTMP. Its pathway is pyrimidine metabolism; dTTP biosynthesis. Catalyzes the reductive methylation of 2'-deoxyuridine-5'-monophosphate (dUMP) to 2'-deoxythymidine-5'-monophosphate (dTMP) while utilizing 5,10-methylenetetrahydrofolate (mTHF) as the methyl donor and reductant in the reaction, yielding dihydrofolate (DHF) as a by-product. This enzymatic reaction provides an intracellular de novo source of dTMP, an essential precursor for DNA biosynthesis. In Flavobacterium psychrophilum (strain ATCC 49511 / DSM 21280 / CIP 103535 / JIP02/86), this protein is Thymidylate synthase.